Here is a 94-residue protein sequence, read N- to C-terminus: Integration host factor subunit beta (94 aa).

Belongs to the bacterial histone-like protein family. Heterodimer of an alpha and a beta chain.

In terms of biological role, this protein is one of the two subunits of integration host factor, a specific DNA-binding protein that functions in genetic recombination as well as in transcriptional and translational control. In Dickeya dadantii (strain 3937) (Erwinia chrysanthemi (strain 3937)), this protein is Integration host factor subunit beta (ihfB).